A 438-amino-acid polypeptide reads, in one-letter code: MENDMETATMTQDYHIANINLADWGRKEIEIAETEMPGLMALRKKYKNAKPLKGARIAGCIHMTIQTAVLIETLMLLGAEVRWSSCNIFSTQDHAAAALAQKGIPIFAWKGETEEEYWRCIASTLEGPKGWTPNLLLDDGGDLTAHTLQKHPELCQNIRGVSEETTTGVHRLYRMLKEGSLKFPAINVNDSVTKSKFDNLYGCRESLIDSIKRATDVMIAGKRVVVCGYGDVGKGCAQSLRAYGATVYITEIDPICALQAAMEGYRVVTMDEMADSADIFVTATGNTDIITHEHMLKMKDQAIVCNIGHFDNEIDIASLQDYQWMNIKPQVDQVIFPDGKRLTVLAQGRLVNLGCATGHPSFVMSNSFTNQVLAQIELWQYPEKYPIGVYVLPKHLDEEVARLHLERVGAKLTTLTEKQADYIGVDPEGPFKSEHYRY.

Substrate contacts are provided by threonine 64, aspartate 139, and glutamate 164. Threonine 165–threonine 167 is a binding site for NAD(+). Positions 194 and 198 each coordinate substrate. NAD(+) is bound by residues asparagine 199, glycine 228–glycine 233, glutamate 251, asparagine 286, isoleucine 307–histidine 309, and asparagine 352.

The protein belongs to the adenosylhomocysteinase family. NAD(+) is required as a cofactor.

It is found in the cytoplasm. The enzyme catalyses S-adenosyl-L-homocysteine + H2O = L-homocysteine + adenosine. The protein operates within amino-acid biosynthesis; L-homocysteine biosynthesis; L-homocysteine from S-adenosyl-L-homocysteine: step 1/1. Its function is as follows. May play a key role in the regulation of the intracellular concentration of adenosylhomocysteine. This chain is Adenosylhomocysteinase, found in Coxiella burnetii (strain Dugway 5J108-111).